The sequence spans 475 residues: 1-aminocyclopropane-1-carboxylate synthase CMA101 (475 aa).

Lysine 272 is subject to N6-(pyridoxal phosphate)lysine.

The protein belongs to the class-I pyridoxal-phosphate-dependent aminotransferase family. As to quaternary structure, homodimer. Pyridoxal 5'-phosphate serves as cofactor.

The catalysed reaction is S-adenosyl-L-methionine = 1-aminocyclopropane-1-carboxylate + S-methyl-5'-thioadenosine + H(+). Its pathway is alkene biosynthesis; ethylene biosynthesis via S-adenosyl-L-methionine; ethylene from S-adenosyl-L-methionine: step 1/2. Catalyzes the formation of 1-aminocyclopropane-1-carboxylate, a direct precursor of ethylene in higher plants. This Cucurbita maxima (Pumpkin) protein is 1-aminocyclopropane-1-carboxylate synthase CMA101 (ACS2).